A 441-amino-acid chain; its full sequence is Chromosomal replication initiator protein DnaA (441 aa).

Positions methionine 1–phenylalanine 71 are domain I, interacts with DnaA modulators. Residues phenylalanine 71–serine 99 are domain II. The interval aspartate 100–lysine 318 is domain III, AAA+ region. Residues glycine 143, glycine 145, lysine 146, and threonine 147 each coordinate ATP. Residues lysine 319 to glutamine 441 are domain IV, binds dsDNA.

This sequence belongs to the DnaA family. As to quaternary structure, oligomerizes as a right-handed, spiral filament on DNA at oriC.

The protein localises to the cytoplasm. In terms of biological role, plays an essential role in the initiation and regulation of chromosomal replication. ATP-DnaA binds to the origin of replication (oriC) to initiate formation of the DNA replication initiation complex once per cell cycle. Binds the DnaA box (a 9 base pair repeat at the origin) and separates the double-stranded (ds)DNA. Forms a right-handed helical filament on oriC DNA; dsDNA binds to the exterior of the filament while single-stranded (ss)DNA is stabiized in the filament's interior. The ATP-DnaA-oriC complex binds and stabilizes one strand of the AT-rich DNA unwinding element (DUE), permitting loading of DNA polymerase. After initiation quickly degrades to an ADP-DnaA complex that is not apt for DNA replication. Binds acidic phospholipids. The chain is Chromosomal replication initiator protein DnaA from Leptospira biflexa serovar Patoc (strain Patoc 1 / Ames).